The primary structure comprises 449 residues: Tubulin alpha-8 chain (449 aa).

The MREC motif motif lies at 1–4; that stretch reads MREC. GTP-binding residues include Q11, E71, S140, G144, T145, T179, N206, and N228. E71 contributes to the Mg(2+) binding site. E254 is a catalytic residue.

This sequence belongs to the tubulin family. Dimer of alpha and beta chains. A typical microtubule is a hollow water-filled tube with an outer diameter of 25 nm and an inner diameter of 15 nM. Alpha-beta heterodimers associate head-to-tail to form protofilaments running lengthwise along the microtubule wall with the beta-tubulin subunit facing the microtubule plus end conferring a structural polarity. Microtubules usually have 13 protofilaments but different protofilament numbers can be found in some organisms and specialized cells. It depends on Mg(2+) as a cofactor. Post-translationally, some glutamate residues at the C-terminus are polyglycylated, resulting in polyglycine chains on the gamma-carboxyl group. Glycylation is mainly limited to tubulin incorporated into axonemes (cilia and flagella) whereas glutamylation is prevalent in neuronal cells, centrioles, axonemes, and the mitotic spindle. Both modifications can coexist on the same protein on adjacent residues, and lowering polyglycylation levels increases polyglutamylation, and reciprocally. Cilia and flagella glycylation is required for their stability and maintenance. Flagella glycylation controls sperm motility. Some glutamate residues at the C-terminus are polyglutamylated, resulting in polyglutamate chains on the gamma-carboxyl group. Polyglutamylation plays a key role in microtubule severing by spastin (SPAST). SPAST preferentially recognizes and acts on microtubules decorated with short polyglutamate tails: severing activity by SPAST increases as the number of glutamates per tubulin rises from one to eight, but decreases beyond this glutamylation threshold. Glutamylation is also involved in cilia motility. In terms of processing, the C-terminal phenylalanine residue is cleaved by MATCAP1/KIAA0895L. In terms of tissue distribution, expressed at highest levels in the testis, followed by skeletal and heart muscle. Expressed at low levels in the developing brain.

The protein localises to the cytoplasm. It localises to the cytoskeleton. It carries out the reaction GTP + H2O = GDP + phosphate + H(+). Tubulin is the major constituent of microtubules, a cylinder consisting of laterally associated linear protofilaments composed of alpha- and beta-tubulin heterodimers. Microtubules grow by the addition of GTP-tubulin dimers to the microtubule end, where a stabilizing cap forms. Below the cap, tubulin dimers are in GDP-bound state, owing to GTPase activity of alpha-tubulin. This Mus musculus (Mouse) protein is Tubulin alpha-8 chain (Tuba8).